Reading from the N-terminus, the 419-residue chain is Tyrosine--tRNA ligase (419 aa).

Position 34 (Y34) interacts with L-tyrosine. The short motif at 39–48 (PTADSLHLGN) is the 'HIGH' region element. L-tyrosine is bound by residues Y169 and Q173. The 'KMSKS' region signature appears at 229-233 (KFGKS). K232 serves as a coordination point for ATP. The S4 RNA-binding domain maps to 353-419 (LTLVELLISA…GKKKNFVLTY (67 aa)).

The protein belongs to the class-I aminoacyl-tRNA synthetase family. TyrS type 1 subfamily. In terms of assembly, homodimer.

It is found in the cytoplasm. The catalysed reaction is tRNA(Tyr) + L-tyrosine + ATP = L-tyrosyl-tRNA(Tyr) + AMP + diphosphate + H(+). Catalyzes the attachment of tyrosine to tRNA(Tyr) in a two-step reaction: tyrosine is first activated by ATP to form Tyr-AMP and then transferred to the acceptor end of tRNA(Tyr). The chain is Tyrosine--tRNA ligase from Lactococcus lactis subsp. lactis (strain IL1403) (Streptococcus lactis).